The following is a 481-amino-acid chain: Wax ester synthase/diacylglycerol acyltransferase 1 (481 aa).

Topologically, residues 1 to 185 are cytoplasmic; the sequence is MKAEKVMERE…TTATKKPADS (185 aa). The active-site Proton acceptor is the His147. Residues 186 to 206 traverse the membrane as a helical segment; it reads MAWWLFVGFWFMIRVTFTTIV. Residues 207–481 are Lumenal-facing; that stretch reads EFSKLMLTVC…QGEIFHKTEV (275 aa).

In the N-terminal section; belongs to the long-chain O-acyltransferase family. As to expression, expressed in flowers, siliques, top parts of stems, and leaves. Not found in roots, seeds and young seedlings.

The protein localises to the cell membrane. Its subcellular location is the endoplasmic reticulum membrane. The enzyme catalyses a long chain fatty alcohol + a fatty acyl-CoA = a wax ester + CoA. It carries out the reaction an acyl-CoA + a 1,2-diacyl-sn-glycerol = a triacyl-sn-glycerol + CoA. Its pathway is glycerolipid metabolism; triacylglycerol biosynthesis. It participates in lipid metabolism. Its function is as follows. Bifunctional wax ester synthase/diacylglycerol acyltransferase. Involved in cuticular wax biosynthesis. Required to reduce leaf water loss, especially during drought. This Arabidopsis thaliana (Mouse-ear cress) protein is Wax ester synthase/diacylglycerol acyltransferase 1.